We begin with the raw amino-acid sequence, 98 residues long: MASQPEYENWQQLMDLVKTAVEKDQHELLLTMMMTPDERDALVARINIFCELMKGEMSQRQVSQMLGVGVATITRGSNELKAKSEQEKAVIADLLLKQ.

Residues 59 to 82 (QRQVSQMLGVGVATITRGSNELKA) mediate DNA binding.

It belongs to the TrpR family. Homodimer.

It is found in the cytoplasm. In terms of biological role, this protein is an aporepressor. When complexed with L-tryptophan it binds the operator region of the trp operon and prevents the initiation of transcription. The polypeptide is Trp operon repressor homolog (Vibrio atlanticus (strain LGP32) (Vibrio splendidus (strain Mel32))).